Here is a 1185-residue protein sequence, read N- to C-terminus: CSTWGGGHFSTFDKYQYDFTGTCNYIFATVCDESSPDFNIQFRRGLDKKIARIIIELGPSVIIVEKDSISVRSVGVIKLPYASNGIQIAPYGRSVRLVAKLMEMELVVMWNNEDYLMVLTEKKYMGKTCGMCGNYDGYELNDFVSEGKLLDTYKFAALQKMDDPSEICLSEEISIPAIPHKKYAVICSQLLNLVSPTCSVPKDGFVTRCQLDMQDCSEPGQKNCTCSTLSEYSRQCAMSHQVVFNWRTENFCSVGKCSANQIYEECGSPCIKTCSNPEYSCSSHCTYGCFCPEGTVLDDISKNRTCVHLEQCPCTLNGETYAPGDTMKAACRTCKCTMGQWNCKELPCPGRCSLEGGSFVTTFDSRSYRFHGVCTYILMKSSSLPHNGTLMAIYEKSGYSHSETSLSAIIYLSTKDKIVISQNELLTDDDELKRLPYKSGDITIFKQSSMFIQMHTEFGLELVVQTSPVFQAYVKVSAQFQGRTLGLCGNYNGDTTDDFMTSMDITEGTASLFVDSWRAGNCLPAMERETDPCALSQLNKISAETHCSILTKKGTVFETCHAVVNPTPFYKRCVYQACNYEETFPYICSALGSYARTCSSMGLILENWRNSMDNCTITCTGNQTFSYNTQACERTCLSLSNPTLECHPTDIPIEGCNCPKGMYLNHKNECVRKSHCPCYLEDRKYILPDQSTMTGGITCYCVNGRLSCTGKLQNPAESCKAPKKYISCSDSLENKYGATCAPTCQMLATGIECIPTKCESGCVCADGLYENLDGRCVPPEECPCEYGGLSYGKGEQIQTECEICTCRKGKWKCVQKSRCSSTCNLYGEGHITTFDGQRFVFDGNCEYILAMDGCNVNRPLSSFKIVTENVICGKSGVTCSRSISIYLGNLTIILRDETYSISGKNLQVKYNVKKNALHLMFDIIIPGKYNMTLIWNKHMNFFIKISRETQETICGLCGNYNGNMKDDFETRSKYVASNELEFVNSWKENPLCGDVYFVVDPCSKNPYRKAWAEKTCSIINSQVFSACHNKVNRMPYYEACVRDSCGCDIGGDCECMCDAIAVYAMACLDKGICIDWRTPEFCPVYCEYYNSHRKTGSGGAYSYGSSVNCTWHYRPCNCPNQYYKYVNIEGCYNCSHDEYFDYEKEKCMPCAMQPTSVTLPTATQPTSPSTSSASTVLTETTNPPV.

2 disulfides stabilise this stretch: Cys1–Cys132 and Cys23–Cys168. The VWFD 1 domain maps to 1 to 169 (CSTWGGGHFS…KMDDPSEICL (169 aa)). Asn223 is a glycosylation site (N-linked (GlcNAc...) (complex) asparagine). The TIL 1 domain occupies 257–312 (CSANQIYEECGSPCIKTCSNPEYSCSSHCTYGCFCPEGTVLDDISKNRTCVHLEQC). Positions 350-534 (GRCSLEGGSF…AMERETDPCA (185 aa)) constitute a VWFD 2 domain. 2 disulfides stabilise this stretch: Cys352-Cys488 and Cys374-Cys533. TIL domains are found at residues 619–676 (CTGN…KSHC) and 737–782 (GATC…PEEC). The VWFD 3 domain occupies 821 to 993 (STCNLYGEGH…NSWKENPLCG (173 aa)). Cystine bridges form between Cys823–Cys957, Cys845–Cys992, Cys854–Cys954, and Cys872–Cys879. A glycan (N-linked (GlcNAc...) (complex) asparagine) is linked at Asn930. Over residues 1160-1178 (PTATQPTSPSTSSASTVLT) the composition is skewed to low complexity. Residues 1160–1185 (PTATQPTSPSTSSASTVLTETTNPPV) form a disordered region.

As to quaternary structure, multimer; disulfide-linked. Post-translationally, N-glycosylated with N-acetylglucosamine (6.7%), N-acetylgalactosamine (0.6%), galactose (1.8%), mannose (4.6%), N-acetylneuraminic acid (1.0%) and sulfate-containing glycans (0.7%).

It localises to the secreted. Ovomucin, the glycoprotein responsible for the gel properties of egg white, is composed for 2 subunits, alpha-ovomucin/MUC5B and beta-ovomucin/MUC6. This chain is Mucin-6 (MUC6), found in Gallus gallus (Chicken).